The primary structure comprises 576 residues: Rho GTPase-activating protein gacP (576 aa).

The stretch at 123–189 forms a coiled coil; that stretch reads LKSIIKTELK…RTNFERVGID (67 aa). The Rho-GAP domain occupies 277-462; it reads EDLSVLLNRE…TIIQNFDRIF (186 aa). The interval 472–576 is disordered; that stretch reads VPDTYVPPPN…DEGDAVELSD (105 aa). Over residues 482-500 the composition is skewed to low complexity; the sequence is NTRNNSVNNFNNVQPSSFS. Positions 501-513 are enriched in polar residues; that stretch reads ASTSRSINLNKST. A compositionally biased stretch (low complexity) spans 514 to 530; sequence NNPNINDDNNNNNNINN. Positions 565-576 are enriched in acidic residues; the sequence is SFDEGDAVELSD.

Its subcellular location is the cytoplasm. In terms of biological role, rho GTPase-activating protein involved in the signal transduction pathway. The sequence is that of Rho GTPase-activating protein gacP (gacP) from Dictyostelium discoideum (Social amoeba).